A 186-amino-acid polypeptide reads, in one-letter code: Ribosome-recycling factor (186 aa).

This sequence belongs to the RRF family.

Its subcellular location is the cytoplasm. Its function is as follows. Responsible for the release of ribosomes from messenger RNA at the termination of protein biosynthesis. May increase the efficiency of translation by recycling ribosomes from one round of translation to another. The sequence is that of Ribosome-recycling factor from Pediococcus pentosaceus (strain ATCC 25745 / CCUG 21536 / LMG 10740 / 183-1w).